Here is a 498-residue protein sequence, read N- to C-terminus: Putative antiporter subunit mnhD2 (498 aa).

Transmembrane regions (helical) follow at residues 2–22 (LSNL…ILVF), 32–52 (YLYL…LIYV), 78–98 (LSLI…AYGF), 108–128 (YHLP…FLTS), 130–150 (LFNL…LITL), 161–181 (IIYV…IGLL), 209–229 (ISLI…FMWL), 240–260 (LAAL…IRFF), 271–291 (IHPL…IGVI), 308–328 (IGFI…GAIF), 330–350 (LVND…LVYI), 368–388 (FFGV…PFSG), 403–423 (GNYI…YSLF), and 450–470 (GILS…PVLL).

This sequence belongs to the CPA3 antiporters (TC 2.A.63) subunit D family. In terms of assembly, may form a heterooligomeric complex that consists of seven subunits: mnhA2, mnhB2, mnhC2, mnhD2, mnhE2, mnhF2 and mnhG2.

Its subcellular location is the cell membrane. This is Putative antiporter subunit mnhD2 (mnhD2) from Staphylococcus aureus (strain MRSA252).